We begin with the raw amino-acid sequence, 283 residues long: Shikimate dehydrogenase (NADP(+)) (283 aa).

Shikimate is bound by residues 19–21 (SRS) and Thr66. Residue Lys70 is the Proton acceptor of the active site. Residue Glu82 coordinates NADP(+). Shikimate-binding residues include Asn91 and Asp107. NADP(+)-binding positions include 133-137 (GAGGA) and Ile226. Tyr228 is a binding site for shikimate. Gly249 contacts NADP(+).

Belongs to the shikimate dehydrogenase family. As to quaternary structure, homodimer.

The enzyme catalyses shikimate + NADP(+) = 3-dehydroshikimate + NADPH + H(+). Its pathway is metabolic intermediate biosynthesis; chorismate biosynthesis; chorismate from D-erythrose 4-phosphate and phosphoenolpyruvate: step 4/7. Its function is as follows. Involved in the biosynthesis of the chorismate, which leads to the biosynthesis of aromatic amino acids. Catalyzes the reversible NADPH linked reduction of 3-dehydroshikimate (DHSA) to yield shikimate (SA). The chain is Shikimate dehydrogenase (NADP(+)) from Rhodospirillum rubrum (strain ATCC 11170 / ATH 1.1.1 / DSM 467 / LMG 4362 / NCIMB 8255 / S1).